The sequence spans 67 residues: Phycobilisome 7.8 kDa linker polypeptide, allophycocyanin-associated, core (67 aa).

Residues 1–56 (MRMFKITACVPSQTRIRTQRELQNTYFTKLVPYENWFREQQRIQKMGGKIVKVELF) enclose the CpcD-like domain.

The protein belongs to the phycobilisome linker protein family.

Its subcellular location is the cellular thylakoid membrane. Rod linker protein, associated with allophycocyanin. Linker polypeptides determine the state of aggregation and the location of the disk-shaped phycobiliprotein units within the phycobilisome and modulate their spectroscopic properties in order to mediate a directed and optimal energy transfer. This chain is Phycobilisome 7.8 kDa linker polypeptide, allophycocyanin-associated, core (apcC), found in Thermosynechococcus vestitus (strain NIES-2133 / IAM M-273 / BP-1).